A 722-amino-acid polypeptide reads, in one-letter code: Polyribonucleotide nucleotidyltransferase (722 aa).

D487 and D493 together coordinate Mg(2+). Residues 554–613 (PRIETFKIPTDKIREVIGTGGKVIREIVEKTGAKVNIEDDGTVKVASSDGESIKAAIKWI) enclose the KH domain. The 69-residue stretch at 623–691 (GEIYEGTVVK…DRGKTRLSMK (69 aa)) folds into the S1 motif domain. Residues 697–722 (TGEDLEAKQKAEAKAEGEAPAQAAGE) are disordered. The segment covering 701–713 (LEAKQKAEAKAEG) has biased composition (basic and acidic residues).

It belongs to the polyribonucleotide nucleotidyltransferase family. Mg(2+) is required as a cofactor.

Its subcellular location is the cytoplasm. The enzyme catalyses RNA(n+1) + phosphate = RNA(n) + a ribonucleoside 5'-diphosphate. Involved in mRNA degradation. Catalyzes the phosphorolysis of single-stranded polyribonucleotides processively in the 3'- to 5'-direction. This Rhodopseudomonas palustris (strain TIE-1) protein is Polyribonucleotide nucleotidyltransferase.